Reading from the N-terminus, the 137-residue chain is Fluoride-specific ion channel FluC (137 aa).

Transmembrane regions (helical) follow at residues 11–31, 42–62, 75–95, and 107–127; these read IAVS…SLWF, GTLF…ALAL, LIAV…LDTF, and GFYW…GIIL. 2 residues coordinate Na(+): G82 and T85.

This sequence belongs to the fluoride channel Fluc/FEX (TC 1.A.43) family.

It localises to the cell inner membrane. The enzyme catalyses fluoride(in) = fluoride(out). Na(+) is not transported, but it plays an essential structural role and its presence is essential for fluoride channel function. Functionally, fluoride-specific ion channel. Important for reducing fluoride concentration in the cell, thus reducing its toxicity. In Trichormus variabilis (strain ATCC 29413 / PCC 7937) (Anabaena variabilis), this protein is Fluoride-specific ion channel FluC.